Reading from the N-terminus, the 299-residue chain is Acetylglutamate kinase (299 aa).

Residues 66–67 (GG), Arg88, and Asn196 contribute to the substrate site.

It belongs to the acetylglutamate kinase family. ArgB subfamily.

Its subcellular location is the cytoplasm. It carries out the reaction N-acetyl-L-glutamate + ATP = N-acetyl-L-glutamyl 5-phosphate + ADP. Its pathway is amino-acid biosynthesis; L-arginine biosynthesis; N(2)-acetyl-L-ornithine from L-glutamate: step 2/4. In terms of biological role, catalyzes the ATP-dependent phosphorylation of N-acetyl-L-glutamate. This Alcanivorax borkumensis (strain ATCC 700651 / DSM 11573 / NCIMB 13689 / SK2) protein is Acetylglutamate kinase.